Consider the following 616-residue polypeptide: Dihydroxy-acid dehydratase (616 aa).

Asp-81 serves as a coordination point for Mg(2+). Cys-122 is a binding site for [2Fe-2S] cluster. Residues Asp-123 and Lys-124 each coordinate Mg(2+). Lys-124 bears the N6-carboxylysine mark. Cys-196 contacts [2Fe-2S] cluster. Mg(2+) is bound at residue Glu-496. Ser-522 functions as the Proton acceptor in the catalytic mechanism.

Belongs to the IlvD/Edd family. In terms of assembly, homodimer. The cofactor is [2Fe-2S] cluster. Requires Mg(2+) as cofactor.

The enzyme catalyses (2R)-2,3-dihydroxy-3-methylbutanoate = 3-methyl-2-oxobutanoate + H2O. The catalysed reaction is (2R,3R)-2,3-dihydroxy-3-methylpentanoate = (S)-3-methyl-2-oxopentanoate + H2O. It participates in amino-acid biosynthesis; L-isoleucine biosynthesis; L-isoleucine from 2-oxobutanoate: step 3/4. It functions in the pathway amino-acid biosynthesis; L-valine biosynthesis; L-valine from pyruvate: step 3/4. Functions in the biosynthesis of branched-chain amino acids. Catalyzes the dehydration of (2R,3R)-2,3-dihydroxy-3-methylpentanoate (2,3-dihydroxy-3-methylvalerate) into 2-oxo-3-methylpentanoate (2-oxo-3-methylvalerate) and of (2R)-2,3-dihydroxy-3-methylbutanoate (2,3-dihydroxyisovalerate) into 2-oxo-3-methylbutanoate (2-oxoisovalerate), the penultimate precursor to L-isoleucine and L-valine, respectively. The protein is Dihydroxy-acid dehydratase of Streptomyces griseus subsp. griseus (strain JCM 4626 / CBS 651.72 / NBRC 13350 / KCC S-0626 / ISP 5235).